A 353-amino-acid polypeptide reads, in one-letter code: Variable large protein 12 (353 aa).

The N-terminal stretch at 1–18 is a signal peptide; sequence MRKRISAIIMTLFMVLAS. A lipid anchor (N-palmitoyl cysteine) is attached at Cys19. Cys19 is lipidated: S-diacylglycerol cysteine.

This sequence belongs to the variable large protein (Vlp) family. Beta subfamily.

It localises to the cell outer membrane. Functionally, the Vlp and Vsp proteins are antigenically distinct proteins, only one vlp or vsp gene is transcriptionally active at any one time. Switching between these genes is a mechanism of host immune response evasion. The sequence is that of Variable large protein 12 from Borrelia hermsii.